The following is a 409-amino-acid chain: uncharacterized protein (409 aa).

In terms of domain architecture, OBG-type G spans 5 to 274 (ILIGFVGKPS…LAKQGFVKYE (270 aa)). Residues 11-18 (GKPSSGKS) and 83-87 (DVAGL) each bind GTP.

It belongs to the TRAFAC class OBG-HflX-like GTPase superfamily. OBG GTPase family.

It is found in the cytoplasm. Its subcellular location is the nucleus. This is an uncharacterized protein from Schizosaccharomyces pombe (strain 972 / ATCC 24843) (Fission yeast).